A 799-amino-acid polypeptide reads, in one-letter code: Signal transducer and activator of transcription 5A (799 aa).

A Phosphotyrosine modification is found at Y90. Phosphoserine is present on S128. In terms of domain architecture, SH2 spans 589-686; that stretch reads WNDGAILGFV…EVFSKYYTPV (98 aa). Y682 carries the phosphotyrosine modification. Y699 carries the phosphotyrosine; by JAK2 modification. A disordered region spans residues 778–799; sequence DSLDPRLSPPAGLFASTRGSLS. S785 is modified (phosphoserine).

Belongs to the transcription factor STAT family. Forms a homodimer or a heterodimer with a related family member. Binds NR3C1. Interacts with NCOA1 and SOCS7. Interacts with ERBB4. Interacts with EBF4. Interacts with CD69. Post-translationally, ISGylated. Tyrosine phosphorylated in response to KITLG/SCF, IL2, IL3, IL7, IL15, CSF2/GMCSF, GH1, PRL, EPO and THPO. Activated KIT promotes phosphorylation on tyrosine residues and subsequent translocation to the nucleus. Tyrosine phosphorylated in response to constitutively activated FGFR1, FGFR2, FGFR3 and FGFR4. Tyrosine phosphorylation is required for DNA-binding activity and dimerization. Serine phosphorylation is also required for maximal transcriptional activity. Tyrosine phosphorylated in response to signaling via activated FLT3; wild-type FLT3 results in much weaker phosphorylation than constitutively activated mutant FLT3. Alternatively, can be phosphorylated by JAK2 at Tyr-699.

The protein resides in the cytoplasm. It localises to the nucleus. In terms of biological role, carries out a dual function: signal transduction and activation of transcription. Mediates cellular responses to the cytokine KITLG/SCF and other growth factors. May mediate cellular responses to activated FGFR1, FGFR2, FGFR3 and FGFR4. Binds to the GAS element and activates PRL-induced transcription. Regulates the expression of milk proteins during lactation. In Sus scrofa (Pig), this protein is Signal transducer and activator of transcription 5A (STAT5A).